The following is a 308-amino-acid chain: Oxygen-dependent coproporphyrinogen-III oxidase (308 aa).

Residue Ser-100 participates in substrate binding. A divalent metal cation contacts are provided by His-104 and His-114. The active-site Proton donor is His-114. Asn-116–Arg-118 serves as a coordination point for substrate. A divalent metal cation-binding residues include His-153 and His-183. An important for dimerization region spans residues Tyr-248–Lys-283. Residue Gly-266 to Arg-268 coordinates substrate.

This sequence belongs to the aerobic coproporphyrinogen-III oxidase family. Homodimer. A divalent metal cation is required as a cofactor.

It localises to the cytoplasm. The enzyme catalyses coproporphyrinogen III + O2 + 2 H(+) = protoporphyrinogen IX + 2 CO2 + 2 H2O. Its pathway is porphyrin-containing compound metabolism; protoporphyrin-IX biosynthesis; protoporphyrinogen-IX from coproporphyrinogen-III (O2 route): step 1/1. Functionally, involved in the heme biosynthesis. Catalyzes the aerobic oxidative decarboxylation of propionate groups of rings A and B of coproporphyrinogen-III to yield the vinyl groups in protoporphyrinogen-IX. This chain is Oxygen-dependent coproporphyrinogen-III oxidase, found in Francisella tularensis subsp. holarctica (strain FTNF002-00 / FTA).